Here is a 498-residue protein sequence, read N- to C-terminus: Zinc finger protein 395 (498 aa).

The tract at residues 129-165 (QKPLSSPIEQSLPTSPGATSTSAQRSVSRSIDVPKRR) is disordered. Polar residues predominate over residues 130–157 (KPLSSPIEQSLPTSPGATSTSAQRSVSR). The short motif at 171–180 (MDEMMAAMVL) is the Nuclear export signal element. Residues 209-245 (KEGGDVSDSGSSTTSGHWSASSGVSTPSPPHTDASPK) are disordered. The segment covering 214–231 (VSDSGSSTTSGHWSASSG) has biased composition (low complexity). Residues 285-310 (YKCLWPNCGKLLRSIVGIKRHVKTQH) form a C2H2-type zinc finger.

It localises to the cytoplasm. It is found in the nucleus. The protein is Zinc finger protein 395 (znf395) of Xenopus laevis (African clawed frog).